The chain runs to 479 residues: Ribosomal RNA small subunit methyltransferase F (479 aa).

Residues 125-131, E149, D176, and D194 contribute to the S-adenosyl-L-methionine site; that span reads AAAPGSK. Residue C247 is the Nucleophile of the active site.

It belongs to the class I-like SAM-binding methyltransferase superfamily. RsmB/NOP family.

It is found in the cytoplasm. It catalyses the reaction cytidine(1407) in 16S rRNA + S-adenosyl-L-methionine = 5-methylcytidine(1407) in 16S rRNA + S-adenosyl-L-homocysteine + H(+). In terms of biological role, specifically methylates the cytosine at position 1407 (m5C1407) of 16S rRNA. This Shigella dysenteriae serotype 1 (strain Sd197) protein is Ribosomal RNA small subunit methyltransferase F.